The following is a 431-amino-acid chain: Tyrosine--tRNA ligase (431 aa).

Tyr34 contacts L-tyrosine. The 'HIGH' region signature appears at 39–48 (PTADSLHIGH). L-tyrosine-binding residues include Tyr171 and Gln175. Positions 231–235 (KFGKT) match the 'KMSKS' region motif. Residue Lys234 coordinates ATP. In terms of domain architecture, S4 RNA-binding spans 353 to 422 (INVVEALVKT…GKYTILRRGK (70 aa)).

The protein belongs to the class-I aminoacyl-tRNA synthetase family. TyrS type 1 subfamily. As to quaternary structure, homodimer.

The protein localises to the cytoplasm. The catalysed reaction is tRNA(Tyr) + L-tyrosine + ATP = L-tyrosyl-tRNA(Tyr) + AMP + diphosphate + H(+). Catalyzes the attachment of tyrosine to tRNA(Tyr) in a two-step reaction: tyrosine is first activated by ATP to form Tyr-AMP and then transferred to the acceptor end of tRNA(Tyr). The sequence is that of Tyrosine--tRNA ligase from Neisseria meningitidis serogroup C / serotype 2a (strain ATCC 700532 / DSM 15464 / FAM18).